The chain runs to 83 residues: Bowman-Birk type proteinase inhibitor (83 aa).

7 disulfide bridges follow: cysteine 18/cysteine 72, cysteine 19/cysteine 34, cysteine 22/cysteine 68, cysteine 24/cysteine 32, cysteine 42/cysteine 49, cysteine 46/cysteine 61, and cysteine 51/cysteine 59.

Belongs to the Bowman-Birk serine protease inhibitor family.

In Phaseolus lunatus (Lima bean), this protein is Bowman-Birk type proteinase inhibitor.